The primary structure comprises 308 residues: uncharacterized protein (308 aa).

The region spanning 11-87 is the S4 RNA-binding domain; sequence KRLDSLLASL…LKLEVLFEDK (77 aa). Asp131 is an active-site residue.

Belongs to the pseudouridine synthase RluA family.

It carries out the reaction a uridine in RNA = a pseudouridine in RNA. This is an uncharacterized protein from Mycoplasma genitalium (strain ATCC 33530 / DSM 19775 / NCTC 10195 / G37) (Mycoplasmoides genitalium).